A 246-amino-acid chain; its full sequence is Small ribosomal subunit protein uS2 (246 aa).

Belongs to the universal ribosomal protein uS2 family.

The sequence is that of Small ribosomal subunit protein uS2 from Burkholderia pseudomallei (strain 668).